Consider the following 577-residue polypeptide: Aspartate--tRNA ligase (577 aa).

Position 169 (E169) interacts with L-aspartate. The aspartate stretch occupies residues Q193 to K196. R215 is a binding site for L-aspartate. Residues R215–E217 and Q224 contribute to the ATP site. H440 is an L-aspartate binding site. Residue E474 participates in ATP binding. R481 serves as a coordination point for L-aspartate. G526 to R529 contributes to the ATP binding site.

The protein belongs to the class-II aminoacyl-tRNA synthetase family. Type 1 subfamily. In terms of assembly, homodimer.

Its subcellular location is the cytoplasm. The enzyme catalyses tRNA(Asp) + L-aspartate + ATP = L-aspartyl-tRNA(Asp) + AMP + diphosphate. In terms of biological role, catalyzes the attachment of L-aspartate to tRNA(Asp) in a two-step reaction: L-aspartate is first activated by ATP to form Asp-AMP and then transferred to the acceptor end of tRNA(Asp). This is Aspartate--tRNA ligase from Mesoplasma florum (strain ATCC 33453 / NBRC 100688 / NCTC 11704 / L1) (Acholeplasma florum).